Reading from the N-terminus, the 155-residue chain is 6,7-dimethyl-8-ribityllumazine synthase (155 aa).

5-amino-6-(D-ribitylamino)uracil is bound by residues Phe-22, Ala-56–Glu-58, and Ala-80–Ile-82. Position 85–86 (Ala-85–Thr-86) interacts with (2S)-2-hydroxy-3-oxobutyl phosphate. Catalysis depends on His-88, which acts as the Proton donor. A 5-amino-6-(D-ribitylamino)uracil-binding site is contributed by Phe-113. A (2S)-2-hydroxy-3-oxobutyl phosphate-binding site is contributed by Arg-127.

Belongs to the DMRL synthase family.

It catalyses the reaction (2S)-2-hydroxy-3-oxobutyl phosphate + 5-amino-6-(D-ribitylamino)uracil = 6,7-dimethyl-8-(1-D-ribityl)lumazine + phosphate + 2 H2O + H(+). It participates in cofactor biosynthesis; riboflavin biosynthesis; riboflavin from 2-hydroxy-3-oxobutyl phosphate and 5-amino-6-(D-ribitylamino)uracil: step 1/2. In terms of biological role, catalyzes the formation of 6,7-dimethyl-8-ribityllumazine by condensation of 5-amino-6-(D-ribitylamino)uracil with 3,4-dihydroxy-2-butanone 4-phosphate. This is the penultimate step in the biosynthesis of riboflavin. The sequence is that of 6,7-dimethyl-8-ribityllumazine synthase from Clostridium acetobutylicum (strain ATCC 824 / DSM 792 / JCM 1419 / IAM 19013 / LMG 5710 / NBRC 13948 / NRRL B-527 / VKM B-1787 / 2291 / W).